We begin with the raw amino-acid sequence, 268 residues long: MDNLIQKMSEIYSDLHNSNNLIHCLTNAISINDMANAVLSIGQSPFMADNPREVEDVTRKSDSLLVNLGNITDYRIESIKKSVRIANENNIPITLDLVGVSASKLRLDLTLDILKNHTITCIKGNYSEIKSLFIKDLSTKGVDSQKLEVDDVINCCKNLHEKYDSIIVATGQTDIVCANEIYLLNNGDDRLSKITATGCVVGSLIACTLSVSQSIKACVLAISMMNISCEMVDKSVGLSSFKLGLYDNLSRIKWEQIKENIDAKKVES.

Residue methionine 47 coordinates substrate. Residues lysine 123 and threonine 170 each contribute to the ATP site. Alanine 196 is a binding site for substrate.

It belongs to the Thz kinase family. Mg(2+) serves as cofactor.

It catalyses the reaction 5-(2-hydroxyethyl)-4-methylthiazole + ATP = 4-methyl-5-(2-phosphooxyethyl)-thiazole + ADP + H(+). It functions in the pathway cofactor biosynthesis; thiamine diphosphate biosynthesis; 4-methyl-5-(2-phosphoethyl)-thiazole from 5-(2-hydroxyethyl)-4-methylthiazole: step 1/1. Its function is as follows. Catalyzes the phosphorylation of the hydroxyl group of 4-methyl-5-beta-hydroxyethylthiazole (THZ). This Finegoldia magna (strain ATCC 29328 / DSM 20472 / WAL 2508) (Peptostreptococcus magnus) protein is Hydroxyethylthiazole kinase.